A 776-amino-acid polypeptide reads, in one-letter code: Protein SEY1 (776 aa).

Topologically, residues 1–681 (MADRPAIQLI…KRSIITTRTH (681 aa)) are cytoplasmic. Positions 34 to 263 (GLDYHVISVF…TENYYFKPQY (230 aa)) constitute a GB1/RHD3-type G domain. 44–51 (GSQSSGKS) contacts GTP. Residues 682 to 702 (IPPWIYVLLAVLGWNEFVAVI) form a helical membrane-spanning segment. At 703–705 (RNP) the chain is on the lumenal side. Residues 706–726 (LFVTLTLILGATFFVIHKFGL) traverse the membrane as a helical segment. Residues 727-776 (WGPVVNVVQSAVGETRTAIKDKLRQFVVEDHEVKESFEMKDFSKNEQKEK) are Cytoplasmic-facing.

It belongs to the TRAFAC class dynamin-like GTPase superfamily. GB1/RHD3 GTPase family. RHD3 subfamily. In terms of assembly, interacts with RTN1 and YOP1; GTP binding is not required for these interactions.

The protein resides in the endoplasmic reticulum membrane. In terms of biological role, cooperates with the reticulon proteins RTN1 and RTN2 and the tubule-shaping DP1 family protein YOP1 to generate and maintain the structure of the tubular endoplasmic reticulum network. Has GTPase activity, which is required for its function in ER organization. This is Protein SEY1 from Saccharomyces cerevisiae (strain ATCC 204508 / S288c) (Baker's yeast).